The sequence spans 352 residues: Trifunctional sesterterpene/triterpene/sesquarterpene synthase (352 aa).

This sequence belongs to the large terpene synthase family.

The enzyme catalyses (2E,6E,10E,14E)-geranylfarnesyl diphosphate = beta-geranylfarnesene + diphosphate. It carries out the reaction all-trans-hexaprenyl diphosphate = beta-hexaprene + diphosphate. The catalysed reaction is all-trans-heptaprenyl diphosphate = beta-heptaprene + diphosphate. Functionally, catalyzes the conversion of geranylfarnesyl diphosphate (GFPP) and hexaprenyl diphosphate (HexPP) into beta-geranylfarnesene and beta-hexaprene, respectively. Also produces beta-heptaprene from heptaprenyl diphosphate (HepPP) as a minor product. This chain is Trifunctional sesterterpene/triterpene/sesquarterpene synthase, found in Shouchella clausii (Alkalihalobacillus clausii).